Here is an 863-residue protein sequence, read N- to C-terminus: MPKKNSPLLPKETTTTQSSVDTSGSSNLTWPVSEHTIRRPLWARLLGQILDPWLDLSIEPEHSVQYNDGRPIIYVLEDYGLCNTLILDKACRKTKLPSPLIPLSGNPLQRKRAYLALSRRSSSNSLIPNQRGGKTHSDSLANLLQAHRIRDTLDVHLVPVSIFIGRTPDRQSGWFAVLFSENWALVGRFRRILAILLNGRNTIVCFAPPISVRQTLNEGLPPERTLRKLQRVLRTHFRRIRETVIGPDLSTRRLLVDNVLATEAVREAIGAQAKRDGTDLSETWRKAQAYAWEIAADYSSPVIRSADFLFSHVWNRIYAGVLVHHVDSFKEISPGHEIVYVPSHRSHMDYLLLSYCLYKCSIGLPHIVAGINLNLPVVGTLLRKCGAFFIRRSIKGNMLYSVVLSEYVAQLVAGGYSLEYFIEGGRSRTGRLLQPKGGMIMMTVQAFLRQPRRPVLFQPIYIGYEKLMEGTSYLDELSGEPKKKESIWRVFWNIPKVLKQKYGQVVVNFGEPIALNDVLAELAPEWEGQALNENEKPAWLSSTVNHLARQIQTRINSAADVNPINLLALALLSTPKHAMGEADLIAQITLCKKILLELPYSNRVTITPHTPERIIAHAEQINILTRVHHPLGDVLRVDGDNAVLLSYFRNNVLHLFTASAWVACCFKNNRRMSRIALIRLGVGMYPFLQAELFLPWTEDQFAQHIQQVIELFVREGLLLSAGNEEEDPLTRNTSQTDEVFRLRAISHSLQQAFERYYITISILVKNGPGTLSASELESLCQLAAQRLSLLYASTAPEFFDKGLFRGFIQKLRELNLVWPDTYSKLLFDERLDTSAKDAQVILGRELRHTIERISPEATKPAPK.

Residues 1-29 (MPKKNSPLLPKETTTTQSSVDTSGSSNLT) are disordered. The segment covering 12–29 (ETTTTQSSVDTSGSSNLT) has biased composition (polar residues). Positions 343-348 (SHRSHM) match the HXXXXD motif motif.

The protein belongs to the GPAT/DAPAT family.

The protein localises to the cell inner membrane. It carries out the reaction sn-glycerol 3-phosphate + an acyl-CoA = a 1-acyl-sn-glycero-3-phosphate + CoA. It functions in the pathway phospholipid metabolism; CDP-diacylglycerol biosynthesis; CDP-diacylglycerol from sn-glycerol 3-phosphate: step 1/3. The sequence is that of Glycerol-3-phosphate acyltransferase from Xylella fastidiosa (strain M23).